Here is a 113-residue protein sequence, read N- to C-terminus: Parvalbumin beta (113 aa).

Ala-1 is subject to N-acetylalanine. Cys-18 carries an S-linked (Glc) cysteine glycan. EF-hand domains lie at 38 to 73 and 77 to 112; these read FSADELKKLFKIADEDKEGFIEEDELKLFLIAFAAD and LTDAETKAFLKAGDSDGDGKIGVDEFGALVDKWGAK. 11 residues coordinate Ca(2+): Asp-51, Asp-53, Glu-55, Phe-57, Glu-59, Glu-62, Asp-90, Asp-92, Asp-94, Lys-96, and Glu-101.

Belongs to the parvalbumin family. As to expression, muscle (at protein level).

Its function is as follows. In muscle, parvalbumin is thought to be involved in relaxation after contraction. It binds two calcium ions. This chain is Parvalbumin beta, found in Gadus morhua subsp. callarias (Baltic cod).